The following is a 657-amino-acid chain: ER degradation-enhancing alpha-mannosidase-like protein 1 (657 aa).

Residues 1 to 4 are Cytoplasmic-facing; it reads MQWR. The helical; Signal-anchor for type II membrane protein transmembrane segment at 5–25 threads the bilayer; sequence ALVLGLVLLRLGLHGVLWLVF. The Lumenal portion of the chain corresponds to 26-657; the sequence is GLGPSMGFYQ…RQIDQMVGLI (632 aa). Positions 48–94 are disordered; sequence SPDGPASPTSGPVGRPGGVSGPSWLQPPGTGAAQSPRKAPRRPGPGM. N-linked (GlcNAc...) asparagine glycosylation is found at asparagine 181, asparagine 198, asparagine 299, asparagine 342, and asparagine 624.

This sequence belongs to the glycosyl hydrolase 47 family. In terms of assembly, interacts with DNAJC10. Interacts with DERL2 and DERL3. Binds to SEL1L.

It localises to the endoplasmic reticulum membrane. Functionally, extracts misfolded glycoproteins, but not glycoproteins undergoing productive folding, from the calnexin cycle. It is directly involved in endoplasmic reticulum-associated degradation (ERAD) and targets misfolded glycoproteins for degradation in an N-glycan-independent manner, probably by forming a complex with SEL1L. It has low mannosidase activity, catalyzing mannose trimming from Man8GlcNAc2 to Man7GlcNAc2. This chain is ER degradation-enhancing alpha-mannosidase-like protein 1 (EDEM1), found in Homo sapiens (Human).